The primary structure comprises 211 residues: Small ribosomal subunit protein uS3 (211 aa).

A KH type-2 domain is found at 38 to 106 (LRSFVKKTFH…DVELHIVEVK (69 aa)).

Belongs to the universal ribosomal protein uS3 family. As to quaternary structure, part of the 30S ribosomal subunit. Forms a tight complex with proteins S10 and S14.

Binds the lower part of the 30S subunit head. Binds mRNA in the 70S ribosome, positioning it for translation. The protein is Small ribosomal subunit protein uS3 of Anaplasma marginale (strain Florida).